A 690-amino-acid chain; its full sequence is MAKKKSEEHSGADANDSDYTEEPNFDDPPNFVDNISDEDLLGDMLAQRPSEADGVESVVVVDNMPKVEPSRLEKLKSVINKLFSQCGEIVNVVYPVDEEGKTKGYAFMEYKTASQAEDAVKKLNNHRLDKNYTFAVNLFTDFQKYENIPEKWEPPTVQPFKVQSDLYNFINDPDAYDQYCVAAETAPNCVQVGFWQNTLPEPNELETRERFTDTFVKWSPLGTYVVTFHKPGVAIWGGSSFQKIQKFPHPGTQFVEFSPCENYLVTYGPTPTGQKIIIWDIRTGTEKRSFVGDGMSVLSMFRWSHDDKFVARMGENSIHIYETPSFYLLDLKSIKIPGIRGFSWSPTDNVIAYWVEEQNQIPARVTLMEIPKKRETRNKNLFHVADCKLHWQKSGDYLCVKVDRYSKLKKDKKELDVKFLGMFYNFEIFHMREKEIPVDSVEIRELILAFAWEPIGNKFSIIHGEPNSSNVSFYEVNKGVKPSLVKRLEKKSCTHLFWSPRGQFIVMANLTMGTFEFVDTTNDYIISASPDHFRASEVEWDPTGRYVVTGVSSWKVKEDTGFNMYTFQGRIIRRTILKNFVQFLWRPRPPTLLSEEKQKEIKKNLKKYYPVFEQKDRLRLTRASKELLEKRSQLRETFMEYRNKRIAEWKDQKSRRVMLRGHVDTDNLETDEVDEEVVEFLVKEEITLLE.

A compositionally biased stretch (basic and acidic residues) spans 1 to 11; it reads MAKKKSEEHSG. The tract at residues 1–36 is disordered; the sequence is MAKKKSEEHSGADANDSDYTEEPNFDDPPNFVDNIS. The segment covering 15–25 has biased composition (acidic residues); that stretch reads NDSDYTEEPNF. In terms of domain architecture, RRM spans 57–141; the sequence is SVVVVDNMPK…YTFAVNLFTD (85 aa). 5 WD repeats span residues 207–246, 292–331, 334–369, 442–484, and 530–575; these read TRER…KIQK, GDGM…LLDL, IKIP…TLME, EIRE…KPSL, and PDHF…IRRT. Residues 614 to 645 adopt a coiled-coil conformation; the sequence is QKDRLRLTRASKELLEKRSQLRETFMEYRNKR.

Belongs to the eIF-3 subunit B family. Component of the eukaryotic translation initiation factor 3 (eIF-3) complex. The eIF-3 complex interacts with pix. Interacts with mxt.

The protein localises to the cytoplasm. Its function is as follows. RNA-binding component of the eukaryotic translation initiation factor 3 (eIF-3) complex, which is involved in protein synthesis of a specialized repertoire of mRNAs and, together with other initiation factors, stimulates binding of mRNA and methionyl-tRNAi to the 40S ribosome. The eIF-3 complex specifically targets and initiates translation of a subset of mRNAs involved in cell proliferation. In Drosophila virilis (Fruit fly), this protein is Eukaryotic translation initiation factor 3 subunit B.